The primary structure comprises 147 residues: Arginine vasopressin-induced protein 1 (147 aa).

2 disordered regions span residues 1-24 and 104-147; these read MGTPASVVSEPPPWQAPIEARGRK and LANP…QIRH. Over residues 105–119 the composition is skewed to polar residues; sequence ANPQSATETASSEQY. The segment covering 121–134 has biased composition (basic residues); it reads HSRKKSARIRRNWR. A compositionally biased stretch (polar residues) spans 137 to 147; sequence GPTSYLHQIRH.

Its function is as follows. May be involved in MAP kinase activation, epithelial sodium channel (ENaC) down-regulation and cell cycling. The protein is Arginine vasopressin-induced protein 1 (AVPI1) of Homo sapiens (Human).